The sequence spans 435 residues: MAKRTLGLAKAAKAKKQKREEKSESPEKDSGNEEEQLTVELPEGATDEISQLIGLHQTYLQSERDNELLVNGIIHECDRLLRSNEDGKEELPAIFHSIYATALAELSKFVEEEEEEEKKEKEEQESDKKIKEFFDAALERIEIGLEKHPNDVNLLIAKSKILIDQIVLQYISPLSVDSKKKEIEVEVEKLLDTALEIYELAEVKANESKNYEVFNDLETLDILQALDDLLDIVDNFGKNNLEEEEEDEDEETEKDNGDDEDEVEIELTEDHPLYVIKTSDKYNQWWRDHTHTYLDNLKKLDSKDVLPEVLREVNHRLGQSYLQESEIPTTVFTTLKYDDEYDGAKELEGLTVEEAQKISQDLISKALKYLKGAKDEEDPETWVDIAEAMITLGNLHDIDSKEQEDLYKEAEEILKKANNATNGKFKDILENLLEN.

Disordered regions lie at residues 1–44 and 239–263; these read MAKR…LPEG and NNLE…EDEV. Residues 18 to 31 are compositionally biased toward basic and acidic residues; that stretch reads KREEKSESPEKDSG. Residues 242–263 show a composition bias toward acidic residues; that stretch reads EEEEEDEDEETEKDNGDDEDEV.

The protein belongs to the ETT1 family.

It is found in the nucleus. Its function is as follows. Required for correct translation termination and probably involved in regulation of hypoxic gene expression. This Candida tropicalis (strain ATCC MYA-3404 / T1) (Yeast) protein is Enhancer of translation termination 1 (ETT1).